The sequence spans 476 residues: Exodeoxyribonuclease 7 large subunit (476 aa).

The protein belongs to the XseA family. Heterooligomer composed of large and small subunits.

It is found in the cytoplasm. The enzyme catalyses Exonucleolytic cleavage in either 5'- to 3'- or 3'- to 5'-direction to yield nucleoside 5'-phosphates.. Its function is as follows. Bidirectionally degrades single-stranded DNA into large acid-insoluble oligonucleotides, which are then degraded further into small acid-soluble oligonucleotides. The sequence is that of Exodeoxyribonuclease 7 large subunit from Bartonella tribocorum (strain CIP 105476 / IBS 506).